Here is a 247-residue protein sequence, read N- to C-terminus: ATP synthase subunit a, chloroplastic (247 aa).

5 helical membrane-spanning segments follow: residues 38–58, 95–115, 134–154, 199–219, and 220–240; these read QVLI…SIAV, VPFI…GALL, INTT…AGLT, LVVV…VMFL, and GLFT…AYIG.

The protein belongs to the ATPase A chain family. As to quaternary structure, F-type ATPases have 2 components, CF(1) - the catalytic core - and CF(0) - the membrane proton channel. CF(1) has five subunits: alpha(3), beta(3), gamma(1), delta(1), epsilon(1). CF(0) has four main subunits: a, b, b' and c.

It is found in the plastid. The protein resides in the chloroplast thylakoid membrane. Its function is as follows. Key component of the proton channel; it plays a direct role in the translocation of protons across the membrane. The polypeptide is ATP synthase subunit a, chloroplastic (Eucalyptus globulus subsp. globulus (Tasmanian blue gum)).